Here is a 143-residue protein sequence, read N- to C-terminus: Nucleoside diphosphate kinase (143 aa).

Residues Lys10, Phe58, Arg86, Thr92, Arg103, and Asn113 each coordinate ATP. Residue His116 is the Pros-phosphohistidine intermediate of the active site.

This sequence belongs to the NDK family. In terms of assembly, homotetramer. Requires Mg(2+) as cofactor.

The protein resides in the cytoplasm. It carries out the reaction a 2'-deoxyribonucleoside 5'-diphosphate + ATP = a 2'-deoxyribonucleoside 5'-triphosphate + ADP. The catalysed reaction is a ribonucleoside 5'-diphosphate + ATP = a ribonucleoside 5'-triphosphate + ADP. Major role in the synthesis of nucleoside triphosphates other than ATP. The ATP gamma phosphate is transferred to the NDP beta phosphate via a ping-pong mechanism, using a phosphorylated active-site intermediate. The chain is Nucleoside diphosphate kinase from Ehrlichia ruminantium (strain Welgevonden).